An 82-amino-acid chain; its full sequence is Defensin-like protein 208 (82 aa).

The first 29 residues, 1 to 29, serve as a signal peptide directing secretion; that stretch reads MAKNLNTVSFTVLLLVLLMASTGILETEA. 3 disulfide bridges follow: Cys38/Cys63, Cys50/Cys76, and Cys54/Cys78.

Belongs to the DEFL family.

It is found in the secreted. This chain is Defensin-like protein 208, found in Arabidopsis thaliana (Mouse-ear cress).